The chain runs to 346 residues: Heat-inducible transcription repressor HrcA (346 aa).

This sequence belongs to the HrcA family.

In terms of biological role, negative regulator of class I heat shock genes (grpE-dnaK-dnaJ and groELS operons). Prevents heat-shock induction of these operons. The protein is Heat-inducible transcription repressor HrcA of Erythrobacter litoralis (strain HTCC2594).